Here is a 414-residue protein sequence, read N- to C-terminus: D-mannose isomerase (414 aa).

Residues His255 and His390 each act as proton donor/acceptor in the active site.

This sequence belongs to the N-acylglucosamine 2-epimerase family. As to quaternary structure, monomer.

The enzyme catalyses D-mannose = D-fructose. With respect to regulation, strongly inhibited by Ag(2+), Cu(2+) and cetyltrimethyl ammonium bromide (CTAB). Catalyzes the reversible isomerization of D-mannose to D-fructose. Shows high specific activity towards mannose and fructose, and has no detectable activity towards other monosaccharides and disaccharides. This Pseudomonas cannabina pv. alisalensis protein is D-mannose isomerase.